A 350-amino-acid polypeptide reads, in one-letter code: Twinfilin-1 (350 aa).

Ser-2 carries the post-translational modification N-acetylserine. An ADF-H 1 domain is found at 2–139; that stretch reads SHQTGIQASE…SLHGYKKYLL (138 aa). Ser-143 and Ser-277 each carry phosphoserine. The ADF-H 2 domain occupies 177 to 313; sequence GVAFPISQEA…TADFLYEEVH (137 aa). Tyr-309 is subject to Phosphotyrosine. Positions 316–350 are disordered; that stretch reads QHAHKQSFAKPKGPSGKRGIRRIIRGPAETEATTE. Phosphothreonine is present on Thr-349.

The protein belongs to the actin-binding proteins ADF family. Twinfilin subfamily. As to quaternary structure, interacts with G-actin; ADP-actin form and capping protein (CP). May also be able to interact with TWF2 and phosphoinositides, PI(4,5)P2. When bound to PI(4,5)P2, it is down-regulated. Interacts with ACTG1. Post-translationally, phosphorylated on serine and threonine residues.

The protein resides in the cytoplasm. Its subcellular location is the cytoskeleton. In terms of biological role, actin-binding protein involved in motile and morphological processes. Inhibits actin polymerization, likely by sequestering G-actin. By capping the barbed ends of filaments, it also regulates motility. Seems to play an important role in clathrin-mediated endocytosis and distribution of endocytic organelles. This Bos taurus (Bovine) protein is Twinfilin-1 (TWF1).